Here is a 355-residue protein sequence, read N- to C-terminus: Peptide chain release factor 1 (355 aa).

Gln230 is modified (N5-methylglutamine).

This sequence belongs to the prokaryotic/mitochondrial release factor family. Methylated by PrmC. Methylation increases the termination efficiency of RF1.

It is found in the cytoplasm. Functionally, peptide chain release factor 1 directs the termination of translation in response to the peptide chain termination codons UAG and UAA. This chain is Peptide chain release factor 1, found in Geotalea uraniireducens (strain Rf4) (Geobacter uraniireducens).